Reading from the N-terminus, the 227-residue chain is MMIAIPGVLSGRTLDHVRTLVTEAEWVDGNATSGHQSALAKKNRQLPEDGDAAREAGGIILDALGATPLFIAAALPLKVFPPLFNLYGGGERFDTHVDNAIRMKRGTDFRIRSDLSATLFLNDPDSYDGGELVVEDTLGTHKVKLGAGDMILYPASSLHHVTPVTRGERLCSFFWIQSMVRDDGARRTLFDLDTAIQAVAADRGQDDPAIIRLTGVYHNLLRRWAEA.

Positions 78–178 (KVFPPLFNLY…RLCSFFWIQS (101 aa)) constitute a Fe2OG dioxygenase domain. Fe cation-binding residues include histidine 96, aspartate 98, and histidine 159. Arginine 169 provides a ligand contact to 2-oxoglutarate.

It depends on Fe(2+) as a cofactor. L-ascorbate is required as a cofactor.

This Rhizorhabdus wittichii (strain DSM 6014 / CCUG 31198 / JCM 15750 / NBRC 105917 / EY 4224 / RW1) (Sphingomonas wittichii) protein is PKHD-type hydroxylase Swit_4046.